A 130-amino-acid chain; its full sequence is uncharacterized protein (130 aa).

This is an uncharacterized protein from Sputnik virophage.